We begin with the raw amino-acid sequence, 251 residues long: Protein FAM216A (251 aa).

The span at 1 to 16 shows a compositional bias: polar residues; it reads MPNQGPVSDWTECSSS. A disordered region spans residues 1–49; that stretch reads MPNQGPVSDWTECSSSAEPPAVARAEGGGGGSAGHSYYQNSKDRIKDGH.

This sequence belongs to the FAM216 family.

This Bos taurus (Bovine) protein is Protein FAM216A (FAM216A).